The primary structure comprises 860 residues: Leucine--tRNA ligase (860 aa).

A 'HIGH' region motif is present at residues 42–52 (PYPSGRLHMGH). The 'KMSKS' region motif lies at 619-623 (KMSKS). K622 contacts ATP.

Belongs to the class-I aminoacyl-tRNA synthetase family.

It localises to the cytoplasm. The enzyme catalyses tRNA(Leu) + L-leucine + ATP = L-leucyl-tRNA(Leu) + AMP + diphosphate. This Yersinia enterocolitica serotype O:8 / biotype 1B (strain NCTC 13174 / 8081) protein is Leucine--tRNA ligase.